The chain runs to 227 residues: 27 kDa A-type inclusion protein (227 aa).

Positions 4–210 (MPKQREMRRL…AECRRGNNGS (207 aa)) form a coiled coil.

This is 27 kDa A-type inclusion protein from Bos taurus (Bovine).